Consider the following 199-residue polypeptide: Peptidyl-prolyl cis-trans isomerase CYP22 (199 aa).

One can recognise a PPIase cyclophilin-type domain in the interval 35-198 (FFDVSIGGIP…LAVVITECGE (164 aa)).

This sequence belongs to the cyclophilin-type PPIase family. As to expression, ubiquitous.

It catalyses the reaction [protein]-peptidylproline (omega=180) = [protein]-peptidylproline (omega=0). Its function is as follows. PPIases accelerate the folding of proteins. It catalyzes the cis-trans isomerization of proline imidic peptide bonds in oligopeptides. In Arabidopsis thaliana (Mouse-ear cress), this protein is Peptidyl-prolyl cis-trans isomerase CYP22 (CYP22).